The following is a 464-amino-acid chain: Fumarate hydratase class II (464 aa).

Substrate is bound by residues 98–100 (SGT), 129–132 (HPND), 139–141 (SSN), and T187. H188 serves as the catalytic Proton donor/acceptor. S318 is an active-site residue. Substrate-binding positions include S319 and 324–326 (KVN).

It belongs to the class-II fumarase/aspartase family. Fumarase subfamily. As to quaternary structure, homotetramer.

The protein localises to the cytoplasm. The catalysed reaction is (S)-malate = fumarate + H2O. It functions in the pathway carbohydrate metabolism; tricarboxylic acid cycle; (S)-malate from fumarate: step 1/1. In terms of biological role, involved in the TCA cycle. Catalyzes the stereospecific interconversion of fumarate to L-malate. This Haemophilus ducreyi (strain 35000HP / ATCC 700724) protein is Fumarate hydratase class II.